We begin with the raw amino-acid sequence, 158 residues long: Eukaryotic translation initiation factor 5A-1 (158 aa).

The segment covering 1-10 (MSDEEHHFES) has biased composition (basic and acidic residues). Residues 1-21 (MSDEEHHFESSDAGASKTYPQ) are disordered. Serine 2 carries the phosphoserine modification. A Hypusine modification is found at lysine 51.

The protein belongs to the eIF-5A family. In terms of processing, lys-51 undergoes hypusination, a unique post-translational modification that consists in the addition of a butylamino group from spermidine to lysine side chain, leading to the formation of the unusual amino acid hypusine. eIF-5As are the only known proteins to undergo this modification, which is essential for their function. Expressed in leaf vasculature and inflorescence stems. Present in xylem tissue but not in phloem, and in developing vessel members, but not in mature vessels members. Detected in anthers.

Translation factor that promotes translation elongation and termination, particularly upon ribosome stalling at specific amino acid sequence contexts. Binds between the exit (E) and peptidyl (P) site of the ribosome and promotes rescue of stalled ribosome: specifically required for efficient translation of polyproline-containing peptides as well as other motifs that stall the ribosome. Acts as a ribosome quality control (RQC) cofactor by joining the RQC complex to facilitate peptidyl transfer during CAT tailing step. Involved in xylogenesis. The polypeptide is Eukaryotic translation initiation factor 5A-1 (ELF5A-1) (Arabidopsis thaliana (Mouse-ear cress)).